Here is a 267-residue protein sequence, read N- to C-terminus: Thiamine pyrophosphokinase 2 (267 aa).

It belongs to the thiamine pyrophosphokinase family. As to expression, expressed in leaves and at lower levels in flowers.

Its subcellular location is the cytoplasm. The protein resides in the cytosol. The enzyme catalyses thiamine + ATP = thiamine diphosphate + AMP + H(+). Its pathway is cofactor biosynthesis; thiamine diphosphate biosynthesis; thiamine diphosphate from thiamine: step 1/1. In terms of biological role, catalyzes the phosphorylation of thiamine to thiamine pyrophosphate (TPP). TPP is an active cofactor for enzymes involved in glycolysis and energy production. Plant leaves require high levels of TPP for photosynthesis and carbohydrate metabolism. The protein is Thiamine pyrophosphokinase 2 of Arabidopsis thaliana (Mouse-ear cress).